Reading from the N-terminus, the 283-residue chain is Protease HtpX (283 aa).

A run of 2 helical transmembrane segments spans residues 4 to 24 (ILLF…ILSV) and 33 to 53 (GGIL…SLFL). Residue His139 participates in Zn(2+) binding. The active site involves Glu140. A Zn(2+)-binding site is contributed by His143. 2 helical membrane passes run 147-167 (GDMV…IFLS) and 190-210 (IYFL…SIIA). Glu218 contributes to the Zn(2+) binding site.

Belongs to the peptidase M48B family. The cofactor is Zn(2+).

It localises to the cell inner membrane. The sequence is that of Protease HtpX from Haemophilus influenzae (strain PittGG).